A 284-amino-acid chain; its full sequence is MVKAVVGFGAACGISAIVACLWAALVITNDINDMYDDVMGELGGFRDISDDTWGTLLDVRHGAGESAEQYVRGIFGRHKRSNSQCSCGLPSQGCPAGAPGNPGAPGEPGGTGPDGKNGPTGLPGLNIPIPNDFPKECIKCPAGPPGQDGLPGQEGFQGLPGDAGKRGTPGKDGEPGRVGDIGDQGTPGQDGQPGLAGPPGRDGLTGKGQPGVAGRPGMPGPRGEPGNNGNPGEEGQTGAQGPTGQPGKDGFNGNDGTPGQAGPQGAVGADAEYCPCPERKRRRV.

The segment at 88-284 (GLPSQGCPAG…PCPERKRRRV (197 aa)) is disordered. 2 triple-helical region regions span residues 94 to 126 (CPAG…PGLN) and 143 to 270 (GPPG…VGAD). The segment covering 106–115 (GEPGGTGPDG) has biased composition (gly residues). Residues 163–177 (AGKRGTPGKDGEPGR) are compositionally biased toward basic and acidic residues. 3 stretches are compositionally biased toward low complexity: residues 181–193 (IGDQ…DGQP), 224–246 (EPGN…TGQP), and 255–271 (DGTP…GADA).

Belongs to the cuticular collagen family. In terms of assembly, collagen polypeptide chains are complexed within the cuticle by disulfide bonds and other types of covalent cross-links. May be a substrate of bli-4.

Functionally, nematode cuticles are composed largely of collagen-like proteins. The cuticle functions both as an exoskeleton and as a barrier to protect the worm from its environment. This Caenorhabditis elegans protein is Cuticle collagen dpy-5 (dpy-5).